Consider the following 261-residue polypeptide: Class II histocompatibility antigen, M alpha chain (261 aa).

Positions 1–26 (MEHEQKSGAVLLRLLRLLWLLPHSWA) are cleaved as a signal peptide. An alpha-1 region spans residues 27–124 (VLEASTPVLW…KLEGQIPVSR (98 aa)). Residues 27-231 (VLEASTPVLW…ALPSDLLENA (205 aa)) lie on the Lumenal side of the membrane. An N-linked (GlcNAc...) asparagine glycan is attached at Asn-41. Cystine bridges form between Cys-50–Cys-105 and Cys-147–Cys-202. An Ig-like C1-type domain is found at 114-215 (PKLEGQIPVS…HEIDRYTAIA (102 aa)). Residues 125–217 (GLSVAEVFTL…IDRYTAIAYW (93 aa)) are alpha-2. The connecting peptide stretch occupies residues 218–231 (VPQNALPSDLLENA). A helical transmembrane segment spans residues 232 to 252 (LCGVAFALGVLGTIIGIVFFL). At 253 to 261 (CSQRPCSGD) the chain is on the cytoplasmic side.

The protein belongs to the MHC class II family. In terms of assembly, heterodimer of an alpha chain (DMA) and a beta chain (DMB). Interacts with MHCII; this interaction mediates rapid selection of high-affinity peptides.

The protein resides in the late endosome membrane. Its subcellular location is the lysosome membrane. Functionally, plays a critical role in catalyzing the release of class II-associated invariant chain peptide (CLIP) from newly synthesized MHC class II molecules and freeing the peptide binding site for acquisition of antigenic peptides. The sequence is that of Class II histocompatibility antigen, M alpha chain (H2-DMa) from Mus musculus (Mouse).